The sequence spans 133 residues: Membrane protein FAM174B (133 aa).

The N-terminal stretch at 1–19 is a signal peptide; that stretch reads MWLYTFAVALIVIAQEING. At 20–67 the chain is on the extracellular side; it reads EPHTRPSSATPLNATLPPQEEGSAQNTTDAAVGSRLSTILRDLPTIKN. The disordered stretch occupies residues 22–47; sequence HTRPSSATPLNATLPPQEEGSAQNTT. N-linked (GlcNAc...) asparagine glycans are attached at residues asparagine 32, asparagine 45, and asparagine 67. The chain crosses the membrane as a helical span at residues 68–88; the sequence is ISIFICVLTTLLITCLVIKIC. Topologically, residues 89–133 are cytoplasmic; sequence RSARKIRKTRKYDIITTPAERVEMAPLNEENDEEDDSTLFDVKYR. The interval 113 to 133 is disordered; the sequence is APLNEENDEEDDSTLFDVKYR. Acidic residues predominate over residues 117-126; the sequence is EENDEEDDST.

Belongs to the FAM174 family.

It is found in the cell membrane. The protein localises to the golgi apparatus. Essential for Golgi structural integrity. This is Membrane protein FAM174B (Fam174b) from Danio rerio (Zebrafish).